A 319-amino-acid chain; its full sequence is Replication factor C small subunit 2 (319 aa).

44-51 provides a ligand contact to ATP; it reads GPPGTGKT.

Belongs to the activator 1 small subunits family. RfcS subfamily. In terms of assembly, heteromultimer composed of small subunits (RfcS) and large subunits (RfcL).

Functionally, part of the RFC clamp loader complex which loads the PCNA sliding clamp onto DNA. This chain is Replication factor C small subunit 2, found in Pyrobaculum aerophilum (strain ATCC 51768 / DSM 7523 / JCM 9630 / CIP 104966 / NBRC 100827 / IM2).